A 95-amino-acid chain; its full sequence is Aspartyl/glutamyl-tRNA(Asn/Gln) amidotransferase subunit C (95 aa).

This sequence belongs to the GatC family. In terms of assembly, heterotrimer of A, B and C subunits.

The catalysed reaction is L-glutamyl-tRNA(Gln) + L-glutamine + ATP + H2O = L-glutaminyl-tRNA(Gln) + L-glutamate + ADP + phosphate + H(+). The enzyme catalyses L-aspartyl-tRNA(Asn) + L-glutamine + ATP + H2O = L-asparaginyl-tRNA(Asn) + L-glutamate + ADP + phosphate + 2 H(+). In terms of biological role, allows the formation of correctly charged Asn-tRNA(Asn) or Gln-tRNA(Gln) through the transamidation of misacylated Asp-tRNA(Asn) or Glu-tRNA(Gln) in organisms which lack either or both of asparaginyl-tRNA or glutaminyl-tRNA synthetases. The reaction takes place in the presence of glutamine and ATP through an activated phospho-Asp-tRNA(Asn) or phospho-Glu-tRNA(Gln). The polypeptide is Aspartyl/glutamyl-tRNA(Asn/Gln) amidotransferase subunit C (Nitratidesulfovibrio vulgaris (strain DSM 19637 / Miyazaki F) (Desulfovibrio vulgaris)).